The sequence spans 287 residues: Large ribosomal subunit protein uL2 (287 aa).

The disordered stretch occupies residues Arg-221 to Ser-287. A compositionally biased stretch (basic residues) spans Lys-258 to Ser-287.

This sequence belongs to the universal ribosomal protein uL2 family. As to quaternary structure, part of the 50S ribosomal subunit. Forms a bridge to the 30S subunit in the 70S ribosome.

One of the primary rRNA binding proteins. Required for association of the 30S and 50S subunits to form the 70S ribosome, for tRNA binding and peptide bond formation. It has been suggested to have peptidyltransferase activity; this is somewhat controversial. Makes several contacts with the 16S rRNA in the 70S ribosome. The protein is Large ribosomal subunit protein uL2 of Prochlorococcus marinus (strain MIT 9301).